The sequence spans 325 residues: Protease HtpX homolog (325 aa).

Residues 20–40 traverse the membrane as a helical segment; it reads IGYLLGGGGGMMIALVIAVAM. H130 is a Zn(2+) binding site. The active site involves E131. H134 provides a ligand contact to Zn(2+). 2 consecutive transmembrane segments (helical) span residues 145 to 165 and 173 to 193; these read IVATLAGAISMLGNFAFFLGG and VMGVVGTLLAMIVAPFGAMIV. Residue E202 coordinates Zn(2+). A disordered region spans residues 286–325; sequence SAAMTARAAAPSQNSGPWGQRSDNAGGNSNGGSRYRGPWS. The segment covering 306 to 325 has biased composition (low complexity); sequence RSDNAGGNSNGGSRYRGPWS.

This sequence belongs to the peptidase M48B family. It depends on Zn(2+) as a cofactor.

The protein resides in the cell inner membrane. This chain is Protease HtpX homolog, found in Brucella melitensis biotype 2 (strain ATCC 23457).